The following is a 400-amino-acid chain: Enoyl-[acyl-carrier-protein] reductase [NADH] (400 aa).

Residues 48-53 (GASTGY), 74-75 (FE), 111-112 (DA), and 139-140 (LA) contribute to the NAD(+) site. Position 225 (Tyr-225) interacts with substrate. Catalysis depends on Tyr-235, which acts as the Proton donor. Residues Lys-244 and 273–275 (VVT) each bind NAD(+).

The protein belongs to the TER reductase family. In terms of assembly, monomer.

It carries out the reaction a 2,3-saturated acyl-[ACP] + NAD(+) = a (2E)-enoyl-[ACP] + NADH + H(+). The protein operates within lipid metabolism; fatty acid biosynthesis. Functionally, involved in the final reduction of the elongation cycle of fatty acid synthesis (FAS II). Catalyzes the reduction of a carbon-carbon double bond in an enoyl moiety that is covalently linked to an acyl carrier protein (ACP). This is Enoyl-[acyl-carrier-protein] reductase [NADH] from Burkholderia cenocepacia (strain ATCC BAA-245 / DSM 16553 / LMG 16656 / NCTC 13227 / J2315 / CF5610) (Burkholderia cepacia (strain J2315)).